Here is a 331-residue protein sequence, read N- to C-terminus: MEPEFLYDLLQLPKGVEPPAEEELSKGGKKKYLPPTSRKDPKFEELQKVLMEWINATLLPEHIVVRSLEEDMFDGLILHHLFQRLAALKLEAEDIALTATSQKHKLTVVLEAVNRSLQLEEWQAKWSVESIFNKDLLSTLHLLVALAKRFQPDLSLPTNVQVEVITIESTKSGLKSEKLVEQLTEYSTDKDEPPKDVFDELFKLAPEKVNAVKEAIVNFVNQKLDRLGLSVQNLDTQFADGVILLLLIGQLEGFFLHLKEFYLTPNSPAEMLHNVTLALELLKDEGLLSCPVSPEDIVNKDAKSTLRVLYGLFCKHTQKAHRDRTPHGAPN.

An N-acetylmethionine modification is found at Met-1. The interval Glu-17–Lys-39 is disordered. Calponin-homology (CH) domains follow at residues Glu-44–Gln-151 and Asn-210–Thr-317.

It belongs to the parvin family. As to quaternary structure, interacts with ILK; the interaction promotes the establishment of cell polarity required for leukocyte migration. Interacts with ARHGEF6; the guanine nucleotide exchange factor activity of ARHGEF6 is essential for the PARVG-induced enhancement of cell spreading. As to expression, expressed predominantly in lymphoid organs, including spleen, thymus, lymph node, bone marrow and peripheral blood leukocytes and moderately in the digestive tract, including stomach, duodenum, jejunum, ileum, ileocecum and appendix, as well as in lung and liver. Also expressed in tumors, but at a lower level than in the corresponding normal tissues.

It localises to the cell junction. Its subcellular location is the focal adhesion. The protein resides in the cell membrane. The protein localises to the cytoplasm. It is found in the cytoskeleton. Its function is as follows. Plays a role with ILK in promoting the cell adhesion and spreading of leukocytes. In Homo sapiens (Human), this protein is Gamma-parvin (PARVG).